We begin with the raw amino-acid sequence, 616 residues long: Chaperone protein HscA (616 aa).

Belongs to the heat shock protein 70 family.

Chaperone involved in the maturation of iron-sulfur cluster-containing proteins. Has a low intrinsic ATPase activity which is markedly stimulated by HscB. Involved in the maturation of IscU. This Pectobacterium carotovorum subsp. carotovorum (strain PC1) protein is Chaperone protein HscA.